Consider the following 394-residue polypeptide: Elongation factor Tu 2 (394 aa).

Positions 10–204 (KPHVNVGTIG…ALDSYIPEPE (195 aa)) constitute a tr-type G domain. The segment at 19 to 26 (GHVDHGKT) is G1. Position 19–26 (19–26 (GHVDHGKT)) interacts with GTP. Threonine 26 is a binding site for Mg(2+). The G2 stretch occupies residues 60-64 (GITIN). The interval 81–84 (DCPG) is G3. Residues 81-85 (DCPGH) and 136-139 (NKCD) contribute to the GTP site. The segment at 136–139 (NKCD) is G4. Positions 174-176 (SAL) are G5.

The protein belongs to the TRAFAC class translation factor GTPase superfamily. Classic translation factor GTPase family. EF-Tu/EF-1A subfamily. Monomer.

Its subcellular location is the cytoplasm. It catalyses the reaction GTP + H2O = GDP + phosphate + H(+). GTP hydrolase that promotes the GTP-dependent binding of aminoacyl-tRNA to the A-site of ribosomes during protein biosynthesis. The polypeptide is Elongation factor Tu 2 (Shewanella oneidensis (strain ATCC 700550 / JCM 31522 / CIP 106686 / LMG 19005 / NCIMB 14063 / MR-1)).